Reading from the N-terminus, the 530-residue chain is Histone-arginine methyltransferase CARMER (530 aa).

One can recognise an SAM-dependent MTase PRMT-type domain in the interval 141–450 (ASQYFQFYGY…QSYDVTIDLH (310 aa)). 6 residues coordinate S-adenosyl-L-methionine: Gln-154, Arg-163, Gly-187, Glu-209, Glu-238, and Thr-266. The residue at position 501 (Arg-501) is an Asymmetric dimethylarginine; by autocatalysis.

It belongs to the class I-like SAM-binding methyltransferase superfamily. Protein arginine N-methyltransferase family. Homodimer. The dimethylated protein is the major form.

The protein resides in the cytoplasm. Its subcellular location is the nucleus. It catalyses the reaction L-arginyl-[protein] + 2 S-adenosyl-L-methionine = N(omega),N(omega)-dimethyl-L-arginyl-[protein] + 2 S-adenosyl-L-homocysteine + 2 H(+). In terms of biological role, methylates (mono- and asymmetric dimethylation) the guanidino nitrogens of arginyl residues in proteins. May methylate histone H3 at 'Arg-17' and activate transcription via chromatin remodeling. This Drosophila erecta (Fruit fly) protein is Histone-arginine methyltransferase CARMER (Art4).